The following is a 288-amino-acid chain: Nucleotide-binding protein AHA_3920 (288 aa).

8-15 (GRSGSGKT) contacts ATP. Position 56-59 (56-59 (DVRN)) interacts with GTP.

The protein belongs to the RapZ-like family.

Displays ATPase and GTPase activities. This is Nucleotide-binding protein AHA_3920 from Aeromonas hydrophila subsp. hydrophila (strain ATCC 7966 / DSM 30187 / BCRC 13018 / CCUG 14551 / JCM 1027 / KCTC 2358 / NCIMB 9240 / NCTC 8049).